The sequence spans 398 residues: MALQAASLVSPALSIPKEGKSSVCLKDSSLFGISFSDHLKSEFSSSTLRCKRELNQQIGAIRAQTTATESPAVNKATPDGKKTLRKGSVVITGASSGLGLATAKALAETGKWHVIMACRDFLKAERAAKSAGITKENYTVMHLDLASLDSVRQFVDNFRQSGRPLDVLVCNAAVYLPTAKEPTFTAEGFELSVGTNHLGHFLLSRLLLEDLNKSSYPSKRLIIVGSITGNTNTLAGNVPPKANLGDLRGLAGGLNGLKSSMIDGGEFDGAKAYKDSKVCNMLTMQEFHKRYHEETGITFASLYPGCIATTGLFREHIPLFRILFPPFQKFITQGYVSEDEAGKRLAQVVSEPSLTKSGVYWSWNKNSASFENQLSQEASDAEKARKVWELSEKLVGLA.

The transit peptide at 1–64 directs the protein to the chloroplast; it reads MALQAASLVS…NQQIGAIRAQ (64 aa).

It belongs to the short-chain dehydrogenases/reductases (SDR) family. POR subfamily.

The protein resides in the plastid. Its subcellular location is the chloroplast. The catalysed reaction is chlorophyllide a + NADP(+) = protochlorophyllide a + NADPH + H(+). It participates in porphyrin-containing compound metabolism; chlorophyll biosynthesis. In terms of biological role, phototransformation of protochlorophyllide (Pchlide) to chlorophyllide (Chlide). The protein is Protochlorophyllide reductase, chloroplastic (PORA) of Cucumis sativus (Cucumber).